The sequence spans 268 residues: 4-hydroxy-tetrahydrodipicolinate reductase (268 aa).

Residues 8 to 13 (GAAGRM) and aspartate 35 contribute to the NAD(+) site. Residue arginine 36 coordinates NADP(+). Residues 99–101 (GTT) and 123–126 (AANF) each bind NAD(+). Histidine 156 (proton donor/acceptor) is an active-site residue. Histidine 157 contacts (S)-2,3,4,5-tetrahydrodipicolinate. The Proton donor role is filled by lysine 160. A (S)-2,3,4,5-tetrahydrodipicolinate-binding site is contributed by 166-167 (GT).

This sequence belongs to the DapB family.

It localises to the cytoplasm. The enzyme catalyses (S)-2,3,4,5-tetrahydrodipicolinate + NAD(+) + H2O = (2S,4S)-4-hydroxy-2,3,4,5-tetrahydrodipicolinate + NADH + H(+). It carries out the reaction (S)-2,3,4,5-tetrahydrodipicolinate + NADP(+) + H2O = (2S,4S)-4-hydroxy-2,3,4,5-tetrahydrodipicolinate + NADPH + H(+). It participates in amino-acid biosynthesis; L-lysine biosynthesis via DAP pathway; (S)-tetrahydrodipicolinate from L-aspartate: step 4/4. Functionally, catalyzes the conversion of 4-hydroxy-tetrahydrodipicolinate (HTPA) to tetrahydrodipicolinate. This Pseudomonas aeruginosa (strain LESB58) protein is 4-hydroxy-tetrahydrodipicolinate reductase.